A 313-amino-acid chain; its full sequence is Protein MFI (313 aa).

As to quaternary structure, can homodimerize. Interacts with MFF; the interaction inhibits MFF interaction with DNM1L. As to expression, enriched in the pancreatic beta cell and the testis and is expressed at low levels in other tissues tested.

The protein localises to the cytoplasm. The protein resides in the cytosol. Its subcellular location is the mitochondrion outer membrane. Functionally, acts as an inhibitor of mitochondrial fission. Interacts with MFF and prevents DNM1L recruitment to mitochondria, promoting a more fused mitochondrial network. In Homo sapiens (Human), this protein is Protein MFI.